The sequence spans 107 residues: Phosphoribosyl-ATP pyrophosphatase (107 aa).

The protein belongs to the PRA-PH family.

Its subcellular location is the cytoplasm. The catalysed reaction is 1-(5-phospho-beta-D-ribosyl)-ATP + H2O = 1-(5-phospho-beta-D-ribosyl)-5'-AMP + diphosphate + H(+). It functions in the pathway amino-acid biosynthesis; L-histidine biosynthesis; L-histidine from 5-phospho-alpha-D-ribose 1-diphosphate: step 2/9. The protein is Phosphoribosyl-ATP pyrophosphatase of Bacillus mycoides (strain KBAB4) (Bacillus weihenstephanensis).